We begin with the raw amino-acid sequence, 351 residues long: Phenoloxidase-activating factor 3 (351 aa).

A signal peptide spans 1-19 (MWLSLVILGVASAIVNVST). Asn-16 carries N-linked (GlcNAc...) asparagine glycosylation. The Clip domain occupies 22–73 (SCTTPNGETATCLPIESCKIFWDYVVTSGADPEINSFLRASLCRQGNYVVCC). Intrachain disulfides connect Cys-23–Cys-72, Cys-33–Cys-64, Cys-39–Cys-73, Cys-89–Cys-224, Cys-127–Cys-143, Cys-167–Cys-176, Cys-268–Cys-285, and Cys-295–Cys-326. Positions 97-350 (VLGGEDTDLG…HLDWIKQNVR (254 aa)) constitute a Peptidase S1 domain. His-142 functions as the Charge relay system in the catalytic mechanism. Positions 158, 160, 163, and 166 each coordinate Ca(2+). Asp-204 functions as the Charge relay system in the catalytic mechanism. Ser-299 (charge relay system) is an active-site residue.

This sequence belongs to the peptidase S1 family. CLIP subfamily. In terms of assembly, in the active form, heterodimer of a light chain and a heavy chain; disulfide-linked. Proteolytically cleaved.

Its subcellular location is the secreted. Cleavage of PPAF2 is Ca(2+)-independent. Inhibited by heparin. Serine endopeptidase which, by cleaving prophenoloxidase activating factor PPAF2, is required for the activation of the prophenoloxidase cascade probably following the recognition of pathogen-derived products. This chain is Phenoloxidase-activating factor 3, found in Holotrichia diomphalia (Korean black chafer).